Reading from the N-terminus, the 71-residue chain is Large ribosomal subunit protein bL31 (71 aa).

C16, C18, C36, and C39 together coordinate Zn(2+).

It belongs to the bacterial ribosomal protein bL31 family. Type A subfamily. As to quaternary structure, part of the 50S ribosomal subunit. It depends on Zn(2+) as a cofactor.

In terms of biological role, binds the 23S rRNA. The chain is Large ribosomal subunit protein bL31 from Pseudothermotoga lettingae (strain ATCC BAA-301 / DSM 14385 / NBRC 107922 / TMO) (Thermotoga lettingae).